The following is a 276-amino-acid chain: Formamidopyrimidine-DNA glycosylase (276 aa).

Residue Pro2 is the Schiff-base intermediate with DNA of the active site. Catalysis depends on Glu3, which acts as the Proton donor. Residue Lys58 is the Proton donor; for beta-elimination activity of the active site. 3 residues coordinate DNA: His94, Arg112, and Arg157. The FPG-type zinc-finger motif lies at 242 to 276 (FVYDRAGQPCRVCGTPIKQIVQGQRSTYYCPTCQR). Arg266 functions as the Proton donor; for delta-elimination activity in the catalytic mechanism.

This sequence belongs to the FPG family. Monomer. Requires Zn(2+) as cofactor.

The catalysed reaction is Hydrolysis of DNA containing ring-opened 7-methylguanine residues, releasing 2,6-diamino-4-hydroxy-5-(N-methyl)formamidopyrimidine.. It catalyses the reaction 2'-deoxyribonucleotide-(2'-deoxyribose 5'-phosphate)-2'-deoxyribonucleotide-DNA = a 3'-end 2'-deoxyribonucleotide-(2,3-dehydro-2,3-deoxyribose 5'-phosphate)-DNA + a 5'-end 5'-phospho-2'-deoxyribonucleoside-DNA + H(+). Involved in base excision repair of DNA damaged by oxidation or by mutagenic agents. Acts as a DNA glycosylase that recognizes and removes damaged bases. Has a preference for oxidized purines, such as 7,8-dihydro-8-oxoguanine (8-oxoG). Has AP (apurinic/apyrimidinic) lyase activity and introduces nicks in the DNA strand. Cleaves the DNA backbone by beta-delta elimination to generate a single-strand break at the site of the removed base with both 3'- and 5'-phosphates. This chain is Formamidopyrimidine-DNA glycosylase, found in Paraburkholderia phymatum (strain DSM 17167 / CIP 108236 / LMG 21445 / STM815) (Burkholderia phymatum).